A 101-amino-acid chain; its full sequence is Small ribosomal subunit protein uS14 (101 aa).

It belongs to the universal ribosomal protein uS14 family. As to quaternary structure, part of the 30S ribosomal subunit. Contacts proteins S3 and S10.

Its function is as follows. Binds 16S rRNA, required for the assembly of 30S particles and may also be responsible for determining the conformation of the 16S rRNA at the A site. The chain is Small ribosomal subunit protein uS14 from Bartonella henselae (strain ATCC 49882 / DSM 28221 / CCUG 30454 / Houston 1) (Rochalimaea henselae).